Reading from the N-terminus, the 567-residue chain is Glutamate--tRNA ligase (567 aa).

Positions 106 to 116 match the 'HIGH' region motif; the sequence is PNPDGPLHLGN.

It belongs to the class-I aminoacyl-tRNA synthetase family. Glutamate--tRNA ligase type 2 subfamily.

Its subcellular location is the cytoplasm. The enzyme catalyses tRNA(Glu) + L-glutamate + ATP = L-glutamyl-tRNA(Glu) + AMP + diphosphate. Functionally, catalyzes the attachment of glutamate to tRNA(Glu) in a two-step reaction: glutamate is first activated by ATP to form Glu-AMP and then transferred to the acceptor end of tRNA(Glu). The chain is Glutamate--tRNA ligase from Sulfolobus acidocaldarius (strain ATCC 33909 / DSM 639 / JCM 8929 / NBRC 15157 / NCIMB 11770).